Here is a 302-residue protein sequence, read N- to C-terminus: MRSSIHASRLRKMGQSIPASTGPMARSANRFLQNRAAIFGLVLLTPLLFAVLTYPLWLPYKPNDIDLMAMNSAPSWKHWFGTDGVGRDVFARTMEGGRISLLVAVSSVVLSTAIGFLIGAISALGGRWADAIAMRSVDLAMTLPPVIFLLVLASIIGSGIWSTVVVIALLSWPVLSRMIRARLLELREREFVMASRGMGAGLGHLLFRHGLPNSIDILVVYATLQVANAILLEAGLSFLGLGVPPPAASWGNMLNAARSTAVLEQFPWQWLFPGGALVLAVLAINFIGDGLRDAFDPRAELN.

Residues 1–22 (MRSSIHASRLRKMGQSIPASTG) form a disordered region. The next 6 helical transmembrane spans lie at 38–58 (IFGL…PLWL), 101–121 (LLVA…IGAI), 147–167 (IFLL…VVVI), 200–222 (AGLG…VVYA), 230–250 (ILLE…AASW), and 268–288 (WQWL…NFIG). The ABC transmembrane type-1 domain occupies 97 to 288 (GRISLLVAVS…LAVLAINFIG (192 aa)).

The protein belongs to the binding-protein-dependent transport system permease family. As to quaternary structure, the complex is composed of two ATP-binding proteins (BRA0404 and BRA0405), two transmembrane proteins (BRA0407 and BRA0408) and a solute-binding protein (BRA0409).

It localises to the cell inner membrane. Functionally, probably part of an ABC transporter complex that could be involved in peptide import. Probably responsible for the translocation of the substrate across the membrane. In Brucella suis biovar 1 (strain 1330), this protein is Putative peptide permease protein BRA0407/BS1330_II0404.